Here is a 597-residue protein sequence, read N- to C-terminus: Inactive metallocarboxypeptidase ECM14 (597 aa).

The first 21 residues, 1-21 (MRLFTHGQVLALLAFVNTISA), serve as a signal peptide directing secretion. A propeptide spanning residues 22–174 (TPSFSTNSYP…QTIYESYPSP (153 aa)) is cleaved from the precursor. A compositionally biased stretch (low complexity) spans 170–179 (SYPSPSQSPS). The tract at residues 170–189 (SYPSPSQSPSGRERGFLPSG) is disordered. A Peptidase M14 domain is found at 202 to 522 (NYQPLSVIVP…NAVMMLGRFL (321 aa)). Residues H264 and E267 each contribute to the Zn(2+) site. Substrate contacts are provided by residues 264-267 (HARE), R322, and 339-340 (DR). C333 and C356 are joined by a disulfide. N349 carries an N-linked (GlcNAc...) asparagine glycan. H396 is a Zn(2+) binding site. Residue 397 to 398 (SY) participates in substrate binding. Residues 543-597 (KDDKPILNDDDDDDADTNDDGIGRKDDSWIPDEYKGDNDRDESDGGWAFRRLRKR) are disordered. The span at 550 to 561 (NDDDDDDADTND) shows a compositional bias: acidic residues. The span at 563–580 (GIGRKDDSWIPDEYKGDN) shows a compositional bias: basic and acidic residues.

It belongs to the peptidase M14 family. The cofactor is Zn(2+).

The protein localises to the vacuole. It localises to the secreted. Inactive carboxypeptidase that may play a role in cell wall organization and biogenesis. The polypeptide is Inactive metallocarboxypeptidase ECM14 (ECM14) (Ajellomyces capsulatus (strain G186AR / H82 / ATCC MYA-2454 / RMSCC 2432) (Darling's disease fungus)).